Consider the following 543-residue polypeptide: MTRYIFVTGGVVSSLGKGIASASLAAILEARGLKVTLLKLDPYINVDPGTMSPFQHGEVFVTHDGAETDLDLGHYERFVRTTMTRNNNFTTGRVYEDVLRRERRGDYLGATIQVIPHITDEIKRRIIKGAGNADVAMVEIGGTVGDIESQPFLEAIRQLRLEVGAKRAMLIHLTLVPYIATAGETKTKPTQHSVKELRSIGLQPDVLICRSDHPIDISSRRKIALFTNVEERAVIALEDVDTIYKIPSVLHAQGLDDIVVERFGLACGSADLSEWERVVDAKLHPEKEVTIAMVGKYMELLDAYKSLIEAMGHAGIQNRTRVNLRYIDSEDIENQGTALLEGADAILVPGGFGLRGVEGKIAAVRYARENKVPYLGICLGMQVAVIEYARDVLGWADANSTEFDKSCGHPVVGLITEWQDATGATEVRSESSDLGGTMRLGAQECQLEANSQVRQCYGKDEVVERHRHRYEVNNNLLPHLIEAGLKVTGRSGDGALVEVIEVADHPWFVACQFHPEFTSTPRDGHPLFSGFVNAALAQKARKA.

Positions 1–265 are amidoligase domain; sequence MTRYIFVTGG…DDIVVERFGL (265 aa). Residue Ser-13 participates in CTP binding. Position 13 (Ser-13) interacts with UTP. Residues 14–19 and Asp-71 each bind ATP; that span reads SLGKGI. Residues Asp-71 and Glu-139 each coordinate Mg(2+). CTP is bound by residues 146-148, 186-191, and Lys-222; these read DIE and KTKPTQ. UTP contacts are provided by residues 186 to 191 and Lys-222; that span reads KTKPTQ. The Glutamine amidotransferase type-1 domain occupies 290 to 541; that stretch reads TIAMVGKYME…VNAALAQKAR (252 aa). Position 351 (Gly-351) interacts with L-glutamine. The active-site Nucleophile; for glutamine hydrolysis is Cys-378. L-glutamine contacts are provided by residues 379–382, Glu-402, and Arg-469; that span reads LGMQ. Active-site residues include His-514 and Glu-516.

The protein belongs to the CTP synthase family. Homotetramer.

It carries out the reaction UTP + L-glutamine + ATP + H2O = CTP + L-glutamate + ADP + phosphate + 2 H(+). The catalysed reaction is L-glutamine + H2O = L-glutamate + NH4(+). The enzyme catalyses UTP + NH4(+) + ATP = CTP + ADP + phosphate + 2 H(+). Its pathway is pyrimidine metabolism; CTP biosynthesis via de novo pathway; CTP from UDP: step 2/2. Its activity is regulated as follows. Allosterically activated by GTP, when glutamine is the substrate; GTP has no effect on the reaction when ammonia is the substrate. The allosteric effector GTP functions by stabilizing the protein conformation that binds the tetrahedral intermediate(s) formed during glutamine hydrolysis. Inhibited by the product CTP, via allosteric rather than competitive inhibition. In terms of biological role, catalyzes the ATP-dependent amination of UTP to CTP with either L-glutamine or ammonia as the source of nitrogen. Regulates intracellular CTP levels through interactions with the four ribonucleotide triphosphates. The chain is CTP synthase from Azotobacter vinelandii (strain DJ / ATCC BAA-1303).